A 679-amino-acid chain; its full sequence is UvrABC system protein B (679 aa).

The region spanning 25 to 176 is the Helicase ATP-binding domain; that stretch reads YGVNQGKQYQ…NVRESLRELV (152 aa). An ATP-binding site is contributed by 38–45; sequence GATGTGKT. Residues 91–114 carry the Beta-hairpin motif; it reads YYDYYQPEAYVPVSDTYIAKTSSV. The Helicase C-terminal domain occupies 429-591; sequence QIDDLLDEIR…IIPKPAGKKP (163 aa). The region spanning 639 to 674 is the UVR domain; the sequence is PEIIDKLEGKMNLAAEELDFEQAAKLRDRIRQLRKK.

The protein belongs to the UvrB family. As to quaternary structure, forms a heterotetramer with UvrA during the search for lesions. Interacts with UvrC in an incision complex.

The protein localises to the cytoplasm. In terms of biological role, the UvrABC repair system catalyzes the recognition and processing of DNA lesions. A damage recognition complex composed of 2 UvrA and 2 UvrB subunits scans DNA for abnormalities. Upon binding of the UvrA(2)B(2) complex to a putative damaged site, the DNA wraps around one UvrB monomer. DNA wrap is dependent on ATP binding by UvrB and probably causes local melting of the DNA helix, facilitating insertion of UvrB beta-hairpin between the DNA strands. Then UvrB probes one DNA strand for the presence of a lesion. If a lesion is found the UvrA subunits dissociate and the UvrB-DNA preincision complex is formed. This complex is subsequently bound by UvrC and the second UvrB is released. If no lesion is found, the DNA wraps around the other UvrB subunit that will check the other stand for damage. In Prochlorococcus marinus (strain MIT 9211), this protein is UvrABC system protein B.